We begin with the raw amino-acid sequence, 370 residues long: Nodulation protein Z (370 aa).

A GT23 domain is found at 47–361 (SSNDRFVVSR…NDPGRLILIE (315 aa)).

This sequence belongs to the glycosyltransferase 23 family.

Its function is as follows. Fucosyltransferase which adds the fucose moiety of the nod factor on its terminal reducing N-acetylglucosamine end. Uses GDP-fucose as the donor group. This is Nodulation protein Z (nodZ) from Bradyrhizobium diazoefficiens (strain JCM 10833 / BCRC 13528 / IAM 13628 / NBRC 14792 / USDA 110).